The primary structure comprises 122 residues: Large ribosomal subunit protein uL14c (122 aa).

Belongs to the universal ribosomal protein uL14 family. Part of the 50S ribosomal subunit.

Its subcellular location is the plastid. Functionally, binds to 23S rRNA. The polypeptide is Large ribosomal subunit protein uL14c (Cuscuta reflexa (Southern Asian dodder)).